The primary structure comprises 64 residues: Putative antitoxin VapB51 (64 aa).

Functionally, possibly the antitoxin component of a type II toxin-antitoxin (TA) system. Its cognate toxin is VapC51. The protein is Putative antitoxin VapB51 of Mycobacterium tuberculosis (strain ATCC 25618 / H37Rv).